Reading from the N-terminus, the 116-residue chain is Ribosome-binding factor A (116 aa).

This sequence belongs to the RbfA family. In terms of assembly, monomer. Binds 30S ribosomal subunits, but not 50S ribosomal subunits or 70S ribosomes.

The protein localises to the cytoplasm. One of several proteins that assist in the late maturation steps of the functional core of the 30S ribosomal subunit. Associates with free 30S ribosomal subunits (but not with 30S subunits that are part of 70S ribosomes or polysomes). Required for efficient processing of 16S rRNA. May interact with the 5'-terminal helix region of 16S rRNA. The polypeptide is Ribosome-binding factor A (Malacoplasma penetrans (strain HF-2) (Mycoplasma penetrans)).